We begin with the raw amino-acid sequence, 268 residues long: MLPYPQIDPVALAIGPLKIHWYGLMYLIGIGGAWLLASRRLNRFDPTWNREKLSDLVFWLSMGVIVGGRLGYVLFYDLHAYLANPTLIFEVWKGGMSFHGGFIGVMLAALWFGKRNNKSFFELMDFVAPLVPIGLGAGRIGNFINAELWGKPTDVPWAMIFPPFSDPAQLPRHPSQLYQFALEGVALFVILWLFSRKPRPTMAVSGMFSLCYGIFRFAVEFVRVPDAQLGYIAFGWLTQGQLLCIPMIVGGLVLIWWAYNRKPTAKPA.

7 consecutive transmembrane segments (helical) span residues 10–30, 56–76, 92–112, 120–140, 174–194, 202–222, and 236–256; these read VALA…LIGI, LVFW…VLFY, WKGG…ALWF, FFEL…AGRI, PSQL…LWLF, MAVS…VEFV, and WLTQ…VLIW. Arginine 139 contributes to the a 1,2-diacyl-sn-glycero-3-phospho-(1'-sn-glycerol) binding site.

This sequence belongs to the Lgt family.

It localises to the cell inner membrane. It catalyses the reaction L-cysteinyl-[prolipoprotein] + a 1,2-diacyl-sn-glycero-3-phospho-(1'-sn-glycerol) = an S-1,2-diacyl-sn-glyceryl-L-cysteinyl-[prolipoprotein] + sn-glycerol 1-phosphate + H(+). It participates in protein modification; lipoprotein biosynthesis (diacylglyceryl transfer). In terms of biological role, catalyzes the transfer of the diacylglyceryl group from phosphatidylglycerol to the sulfhydryl group of the N-terminal cysteine of a prolipoprotein, the first step in the formation of mature lipoproteins. The polypeptide is Phosphatidylglycerol--prolipoprotein diacylglyceryl transferase (Pseudomonas putida (strain ATCC 47054 / DSM 6125 / CFBP 8728 / NCIMB 11950 / KT2440)).